A 1142-amino-acid chain; its full sequence is DNA-directed RNA polymerase subunit beta N-terminal section (1142 aa).

This sequence belongs to the RNA polymerase beta chain family. In terms of assembly, in plastids the minimal PEP RNA polymerase catalytic core is composed of four subunits: alpha, beta, beta', and beta''. When a (nuclear-encoded) sigma factor is associated with the core the holoenzyme is formed, which can initiate transcription.

The protein resides in the plastid. It is found in the chloroplast. The enzyme catalyses RNA(n) + a ribonucleoside 5'-triphosphate = RNA(n+1) + diphosphate. Functionally, DNA-dependent RNA polymerase catalyzes the transcription of DNA into RNA using the four ribonucleoside triphosphates as substrates. In Pleurastrum terricola (Filamentous green alga), this protein is DNA-directed RNA polymerase subunit beta N-terminal section (rpoB1).